Reading from the N-terminus, the 258-residue chain is L-aspartate dehydrogenase 1 (258 aa).

NAD(+)-binding residues include Ala121 and Asn181. The active site involves His211.

Belongs to the L-aspartate dehydrogenase family.

The catalysed reaction is L-aspartate + NADP(+) + H2O = oxaloacetate + NH4(+) + NADPH + H(+). The enzyme catalyses L-aspartate + NAD(+) + H2O = oxaloacetate + NH4(+) + NADH + H(+). Its pathway is cofactor biosynthesis; NAD(+) biosynthesis; iminoaspartate from L-aspartate (dehydrogenase route): step 1/1. In terms of biological role, specifically catalyzes the NAD or NADP-dependent dehydrogenation of L-aspartate to iminoaspartate. The chain is L-aspartate dehydrogenase 1 from Bordetella bronchiseptica (strain ATCC BAA-588 / NCTC 13252 / RB50) (Alcaligenes bronchisepticus).